The chain runs to 358 residues: Molybdenum import ATP-binding protein ModC 2 (358 aa).

An ABC transporter domain is found at 1-234 (MPEQGIEAQL…PRLPLNHPDE (234 aa)). Residue 35 to 42 (GRSGSGKT) participates in ATP binding. In terms of domain architecture, Mop spans 293–358 (NSSILNILRV…AQIKSVALME (66 aa)).

The protein belongs to the ABC transporter superfamily. Molybdate importer (TC 3.A.1.8) family. In terms of assembly, the complex is composed of two ATP-binding proteins (ModC), two transmembrane proteins (ModB) and a solute-binding protein (ModA).

Its subcellular location is the cell inner membrane. The enzyme catalyses molybdate(out) + ATP + H2O = molybdate(in) + ADP + phosphate + H(+). Part of the ABC transporter complex ModABC involved in molybdenum import. Responsible for energy coupling to the transport system. This chain is Molybdenum import ATP-binding protein ModC 2, found in Azotobacter vinelandii.